Consider the following 292-residue polypeptide: uncharacterized protein (292 aa).

A disordered region spans residues 1–213; the sequence is MTTAITPDKK…DQDDDDQKDL (213 aa). Basic residues-rich tracts occupy residues 27-43 and 50-78; these read TKPR…KSKK and AKKR…KKAP. A compositionally biased stretch (polar residues) spans 90–100; the sequence is QQAQASLQKPI. A compositionally biased stretch (pro residues) spans 116–134; the sequence is PRPPTPIPPTGVKPEPAPR. The segment covering 143–158 has biased composition (low complexity); it reads SVSSTTPRTSATTGTT.

This is an uncharacterized protein from Caenorhabditis elegans.